The chain runs to 839 residues: MAPKRKRPATKDDTTKSIPKPKKRAPKRAKTVKEEPVTVVEEGEKHVARFLDEPIPESEAKSTWPDRYKPIEVQPPKASSRKKTKDDEKVEIIRARCHYRRAIVDERQIYELNDDAYVQSGEGKDPFICKIIEMFEGANGKLYFTARWFYRPSDTVMKEFEILIKKKRVFFSEIQDTNELGLLEKKLNILMIPLNENTKETIPATENCDFFCDMNYFLPYDTFEAIQQETMMAISESSTISSDTDIREGAAAISEIGECSQETEGHKKATLLDLYSGCGAMSTGLCMGAQLSGLNLVTKWAVDMNAHACKSLQHNHPETNVRNMTAEDFLFLLKEWEKLCIHFSLRNSPNSEEYANLHGLNNVEDNEDVSEESENEDDGEVFTVDKIVGISFGVPKKLLKRGLYLKVRWLNYDDSHDTWEPIEGLSNCRGKIEEFVKLGYKSGILPLPGGVDVVCGGPPCQGISGHNRFRNLLDPLEDQKNKQLLVYMNIVEYLKPKFVLMENVVDMLKMAKGYLARFAVGRLLQMNYQVRNGMMAAGAYGLAQFRLRFFLWGALPSEIIPQFPLPTHDLVHRGNIVKEFQGNIVAYDEGHTVKLADKLLLKDVISDLPAVANSEKRDEITYDKDPTTPFQKFIRLRKDEASGSQSKSKSKKHVLYDHHPLNLNINDYERVCQVPKRKGANFRDFPGVIVGPGNVVKLEEGKERVKLESGKTLVPDYALTYVDGKSCKPFGRLWWDEIVPTVVTRAEPHNQVIIHPEQNRVLSIRENARLQGFPDDYKLFGPPKQKYIQVGNAVAVPVAKALGYALGTAFQGLAVGKDPLLTLPEGFAFMKPTLPSELA.

Disordered regions lie at residues M1–T38 and L51–D86. The segment covering P19–K30 has biased composition (basic residues). Residues L51–P70 are compositionally biased toward basic and acidic residues. The BAH domain occupies Q108 to Q227. Residues A269–L813 enclose the SAM-dependent MTase C5-type domain. In terms of domain architecture, Chromo spans F382–L447. Residue C460 is part of the active site.

The protein belongs to the class I-like SAM-binding methyltransferase superfamily. C5-methyltransferase family. In terms of assembly, homodimer. Interacts with HP1 and, through its chromodomain, with the N-terminal tail of histone H3 doubly methylated at 'Lys-9' and 'Lys-27'. Binds to JMJ24. Post-translationally, ubiquitinated by JMJ24, subsequently beingargeted to proteasomal degradation thus initiating the destabilization of the heterochromatic state of endogenous silenced loci.

The protein localises to the nucleus. It catalyses the reaction a 2'-deoxycytidine in DNA + S-adenosyl-L-methionine = a 5-methyl-2'-deoxycytidine in DNA + S-adenosyl-L-homocysteine + H(+). Involved in the CpXpG methylation (e.g. CHG cytosine) and in gene silencing. Methylates preferentially transposon-related sequences. Functionally redundant to DRM1/DRM2 to maintain non-CpG methylation. Involved in RNA-directed DNA methylation. The chain is DNA (cytosine-5)-methyltransferase CMT3 from Arabidopsis thaliana (Mouse-ear cress).